We begin with the raw amino-acid sequence, 512 residues long: 2-isopropylmalate synthase (512 aa).

In terms of domain architecture, Pyruvate carboxyltransferase spans 5–268 (LIIFDTTLRD…DVGIDTQHIV (264 aa)). Residues aspartate 14, histidine 202, histidine 204, and asparagine 239 each contribute to the Mn(2+) site. Residues 394–512 (GFVSLAQHSE…SKAERVAAQG (119 aa)) are regulatory domain.

Belongs to the alpha-IPM synthase/homocitrate synthase family. LeuA type 1 subfamily. As to quaternary structure, homodimer. The cofactor is Mn(2+).

It localises to the cytoplasm. The enzyme catalyses 3-methyl-2-oxobutanoate + acetyl-CoA + H2O = (2S)-2-isopropylmalate + CoA + H(+). It participates in amino-acid biosynthesis; L-leucine biosynthesis; L-leucine from 3-methyl-2-oxobutanoate: step 1/4. Its function is as follows. Catalyzes the condensation of the acetyl group of acetyl-CoA with 3-methyl-2-oxobutanoate (2-ketoisovalerate) to form 3-carboxy-3-hydroxy-4-methylpentanoate (2-isopropylmalate). This is 2-isopropylmalate synthase from Acidovorax ebreus (strain TPSY) (Diaphorobacter sp. (strain TPSY)).